A 278-amino-acid polypeptide reads, in one-letter code: Checkpoint protein HUS1B (278 aa).

The protein belongs to the HUS1 family. Interacts with RAD1 and RAD9B. In terms of tissue distribution, expressed strongly in testis, less in spleen, thymus, prostate, colon and leukocytes.

This is Checkpoint protein HUS1B (HUS1B) from Homo sapiens (Human).